A 602-amino-acid chain; its full sequence is Fructan 1-exohydrolase (602 aa).

Positions 1–19 (MAQAWAFLLLPVLLLSSYA) are cleaved as a signal peptide. The active site involves Asp-81. N-linked (GlcNAc...) asparagine glycans are attached at residues Asn-174, Asn-242, and Asn-254. Residues Cys-452 and Cys-498 are joined by a disulfide bond.

Belongs to the glycosyl hydrolase 32 family. In terms of tissue distribution, detected in leaves, with maximum levels at the leaf tip.

It carries out the reaction Hydrolysis of terminal, non-reducing (2-&gt;1)-linked beta-D-fructofuranose residues in fructans.. Its activity is regulated as follows. Inhibited by sucrose. Its function is as follows. Hydrolyzes inulin-type beta-(2,1)-fructans. Has low activity against beta-(2,6)-linked fructans. May play a role as a beta-(2,1)-trimmer during graminan biosynthesis. The protein is Fructan 1-exohydrolase of Bromus pictus (Patagonian grass).